The following is a 412-amino-acid chain: tRNA N6-adenosine threonylcarbamoyltransferase, mitochondrial (412 aa).

The N-terminal 78 residues, 1 to 78 (MLCLVYNSIL…IICLNTHRTI (78 aa)), are a transit peptide targeting the mitochondrion. A divalent metal cation-binding residues include His157 and His161. Substrate is bound by residues 179–183 (LVSGG), Asp212, Ala228, Glu232, 328–329 (RN), and Ser363. Asp364 serves as a coordination point for a divalent metal cation.

It belongs to the KAE1 / TsaD family. In terms of assembly, homodimer. It depends on a divalent metal cation as a cofactor.

It localises to the mitochondrion. It carries out the reaction L-threonylcarbamoyladenylate + adenosine(37) in tRNA = N(6)-L-threonylcarbamoyladenosine(37) in tRNA + AMP + H(+). Its function is as follows. Required for the formation of a threonylcarbamoyl group on adenosine at position 37 (t(6)A37) in mitochondrial tRNAs that read codons beginning with adenine. Probably involved in the transfer of the threonylcarbamoyl moiety of threonylcarbamoyl-AMP (TC-AMP) to the N6 group of A37. Involved in mitochondrial genome maintenance. The chain is tRNA N6-adenosine threonylcarbamoyltransferase, mitochondrial (pgp1) from Schizosaccharomyces pombe (strain 972 / ATCC 24843) (Fission yeast).